Consider the following 255-residue polypeptide: MATIGALVLRFFFIAVLMSSQKSWAIKEEHTIIQAEFYLLPDKRGEFMFDFDGDEIFHVDIEKSETIWRLEEFAKFASFEAQGALANIAVDKANLDVMKERSNNTPDANVAPEVTVLSRSPVNLGEPNILICFIDKFSPPVVNVTWLRNGRPVTEGVSETVFLPRDDHLFRKFHYLTFLPSTDDFYDCEVDHWGLEEPLRKHWEFEEKTLLPETKENVVCALGLFVGLVGIVVGIILIMKGIKKRNVVERRQGAL.

The signal sequence occupies residues 1–25; it reads MATIGALVLRFFFIAVLMSSQKSWA. The interval 26 to 109 is alpha-1; it reads IKEEHTIIQA…ERSNNTPDAN (84 aa). Over 26-216 the chain is Extracellular; it reads IKEEHTIIQA…EKTLLPETKE (191 aa). Positions 110–203 are alpha-2; the sequence is VAPEVTVLSR…GLEEPLRKHW (94 aa). The Ig-like C1-type domain maps to 112–204; the sequence is PEVTVLSRSP…LEEPLRKHWE (93 aa). A disulfide bridge connects residues C132 and C188. A glycan (N-linked (GlcNAc...) asparagine) is linked at N143. Residues 204–216 are connecting peptide; it reads EFEEKTLLPETKE. The helical transmembrane segment at 217–242 threads the bilayer; the sequence is NVVCALGLFVGLVGIVVGIILIMKGI. The Cytoplasmic segment spans residues 243-255; sequence KKRNVVERRQGAL.

Belongs to the MHC class II family.

The protein resides in the membrane. The protein is H-2 class II histocompatibility antigen, E-K alpha chain of Mus musculus (Mouse).